Reading from the N-terminus, the 160-residue chain is Putative pre-16S rRNA nuclease (160 aa).

The protein belongs to the YqgF nuclease family.

Its subcellular location is the cytoplasm. Could be a nuclease involved in processing of the 5'-end of pre-16S rRNA. This chain is Putative pre-16S rRNA nuclease, found in Cereibacter sphaeroides (strain ATCC 17025 / ATH 2.4.3) (Rhodobacter sphaeroides).